Here is a 323-residue protein sequence, read N- to C-terminus: Tyrosine--tRNA ligase (323 aa).

Y36 contributes to the L-tyrosine binding site. The 'HIGH' region motif lies at 41-49 (PSGEIHLGH). L-tyrosine-binding residues include Y158, Q162, D165, and Q180. Residues 214–218 (KMSSS) carry the 'KMSKS' region motif. S217 lines the ATP pocket.

This sequence belongs to the class-I aminoacyl-tRNA synthetase family. TyrS type 3 subfamily. In terms of assembly, homodimer.

The protein resides in the cytoplasm. The catalysed reaction is tRNA(Tyr) + L-tyrosine + ATP = L-tyrosyl-tRNA(Tyr) + AMP + diphosphate + H(+). In terms of biological role, catalyzes the attachment of tyrosine to tRNA(Tyr) in a two-step reaction: tyrosine is first activated by ATP to form Tyr-AMP and then transferred to the acceptor end of tRNA(Tyr). This chain is Tyrosine--tRNA ligase, found in Archaeoglobus fulgidus (strain ATCC 49558 / DSM 4304 / JCM 9628 / NBRC 100126 / VC-16).